A 334-amino-acid chain; its full sequence is Adenosine deaminase (334 aa).

Positions 16 and 18 each coordinate Zn(2+). Residues H18, D20, and G173 each coordinate substrate. Position 200 (H200) interacts with Zn(2+). E203 acts as the Proton donor in catalysis. D281 is a binding site for Zn(2+).

The protein belongs to the metallo-dependent hydrolases superfamily. Adenosine and AMP deaminases family. Adenosine deaminase subfamily. It depends on Zn(2+) as a cofactor.

It catalyses the reaction adenosine + H2O + H(+) = inosine + NH4(+). The catalysed reaction is 2'-deoxyadenosine + H2O + H(+) = 2'-deoxyinosine + NH4(+). In terms of biological role, catalyzes the hydrolytic deamination of adenosine and 2-deoxyadenosine. This Clostridium acetobutylicum (strain ATCC 824 / DSM 792 / JCM 1419 / IAM 19013 / LMG 5710 / NBRC 13948 / NRRL B-527 / VKM B-1787 / 2291 / W) protein is Adenosine deaminase.